We begin with the raw amino-acid sequence, 277 residues long: Putative endonuclease (277 aa).

In terms of biological role, putative endonuclease. The chain is Putative endonuclease from Escherichia coli (Enterobacteria phage T5).